The following is a 406-amino-acid chain: Fructose-1,6-bisphosphatase, chloroplastic (406 aa).

A chloroplast-targeting transit peptide spans 1–47 (MAAAATTSSHLLLLSRQQAAASLQCGLSFRRQPGRLAGGSSAPSVRC). Residues E128, E157, D178, L180, and D181 each coordinate Mg(2+). 181-184 (DGSS) contacts substrate. An intrachain disulfide couples C222 to C227. N286, Y318, Y336, Y338, and K348 together coordinate substrate. E354 is a binding site for Mg(2+).

Belongs to the FBPase class 1 family. As to quaternary structure, homotetramer. Requires Mg(2+) as cofactor.

It localises to the plastid. The protein resides in the chloroplast stroma. It catalyses the reaction beta-D-fructose 1,6-bisphosphate + H2O = beta-D-fructose 6-phosphate + phosphate. It participates in carbohydrate biosynthesis; Calvin cycle. With respect to regulation, inhibited by sodium chloride. Functionally, catalyzes the irreversible reaction from fructose-1,6-bisphosphate to fructose-6-phosphate and inorganic phosphate, to regenerate the primary CO(2) acceptor molecule, ribulose-1,5-bisphosphate. Involved in the regulation of photosynthetic performance and sucrose synthesis. This Oryza sativa subsp. indica (Rice) protein is Fructose-1,6-bisphosphatase, chloroplastic.